The primary structure comprises 275 residues: NH(3)-dependent NAD(+) synthetase (275 aa).

47–54 (GISGGQDS) is an ATP binding site. Asp-53 provides a ligand contact to Mg(2+). Arg-141 is a deamido-NAD(+) binding site. An ATP-binding site is contributed by Thr-161. Residue Glu-166 coordinates Mg(2+). Deamido-NAD(+) is bound by residues Lys-174 and Asp-181. ATP contacts are provided by Lys-190 and Thr-212. 261–262 (HK) provides a ligand contact to deamido-NAD(+).

Belongs to the NAD synthetase family. As to quaternary structure, homodimer.

The enzyme catalyses deamido-NAD(+) + NH4(+) + ATP = AMP + diphosphate + NAD(+) + H(+). It functions in the pathway cofactor biosynthesis; NAD(+) biosynthesis; NAD(+) from deamido-NAD(+) (ammonia route): step 1/1. Catalyzes the ATP-dependent amidation of deamido-NAD to form NAD. Uses ammonia as a nitrogen source. This is NH(3)-dependent NAD(+) synthetase from Lacticaseibacillus casei (strain BL23) (Lactobacillus casei).